A 59-amino-acid polypeptide reads, in one-letter code: Large ribosomal subunit protein bL32 (59 aa).

The disordered stretch occupies residues 1-25; it reads MAVQQNKKSPSKRGMHRSHDFLNAA.

Belongs to the bacterial ribosomal protein bL32 family.

The chain is Large ribosomal subunit protein bL32 from Paraburkholderia phymatum (strain DSM 17167 / CIP 108236 / LMG 21445 / STM815) (Burkholderia phymatum).